A 108-amino-acid polypeptide reads, in one-letter code: Large ribosomal subunit protein bL31B (108 aa).

A disordered region spans residues 81 to 108 (KPAQPVQAPAEEGPVVKGKKKAPAKKKK). Over residues 97–108 (KGKKKAPAKKKK) the composition is skewed to basic residues.

Belongs to the bacterial ribosomal protein bL31 family. Type B subfamily. As to quaternary structure, part of the 50S ribosomal subunit.

In Chlamydia caviae (strain ATCC VR-813 / DSM 19441 / 03DC25 / GPIC) (Chlamydophila caviae), this protein is Large ribosomal subunit protein bL31B.